A 237-amino-acid chain; its full sequence is tRNA-splicing endonuclease subunit Sen2-1 (237 aa).

Catalysis depends on residues Tyr148, His156, and Lys190.

This sequence belongs to the tRNA-intron endonuclease family. In terms of assembly, tRNA splicing endonuclease is a heterotetramer composed of SEN2, SEN15, SEN34/LENG5 and SEN54.

It is found in the nucleus. The enzyme catalyses pretRNA = a 3'-half-tRNA molecule with a 5'-OH end + a 5'-half-tRNA molecule with a 2',3'-cyclic phosphate end + an intron with a 2',3'-cyclic phosphate and a 5'-hydroxyl terminus.. Constitutes one of the two catalytic subunit of the tRNA-splicing endonuclease complex, a complex responsible for identification and cleavage of the splice sites in pre-tRNA. It cleaves pre-tRNA at the 5'- and 3'-splice sites to release the intron. The products are an intron and two tRNA half-molecules bearing 2',3'-cyclic phosphate and 5'-OH termini. There are no conserved sequences at the splice sites, but the intron is invariably located at the same site in the gene, placing the splice sites an invariant distance from the constant structural features of the tRNA body. Probably carries the active site for 5'-splice site cleavage. The sequence is that of tRNA-splicing endonuclease subunit Sen2-1 (SEN1) from Arabidopsis thaliana (Mouse-ear cress).